The following is a 432-amino-acid chain: Adenylosuccinate synthetase (432 aa).

GTP contacts are provided by residues 13 to 19 (GDEGKGK) and 41 to 43 (GHT). The Proton acceptor role is filled by D14. Residues D14 and G41 each contribute to the Mg(2+) site. Residues 14 to 17 (DEGK), 39 to 42 (NAGH), T130, R144, Q225, T240, and R304 each bind IMP. The Proton donor role is filled by H42. Residue 300–306 (ATTGRRR) coordinates substrate. GTP contacts are provided by residues R306, 332–334 (KLD), and 415–417 (STG).

This sequence belongs to the adenylosuccinate synthetase family. In terms of assembly, homodimer. It depends on Mg(2+) as a cofactor.

It is found in the cytoplasm. The catalysed reaction is IMP + L-aspartate + GTP = N(6)-(1,2-dicarboxyethyl)-AMP + GDP + phosphate + 2 H(+). The protein operates within purine metabolism; AMP biosynthesis via de novo pathway; AMP from IMP: step 1/2. Plays an important role in the de novo pathway of purine nucleotide biosynthesis. Catalyzes the first committed step in the biosynthesis of AMP from IMP. This chain is Adenylosuccinate synthetase, found in Sodalis glossinidius (strain morsitans).